A 513-amino-acid chain; its full sequence is Probable cytosol aminopeptidase (513 aa).

The Mn(2+) site is built by Lys277 and Asp282. The active site involves Lys289. Mn(2+) is bound by residues Asp300, Asp359, and Glu361. The active site involves Arg363.

The protein belongs to the peptidase M17 family. It depends on Mn(2+) as a cofactor.

Its subcellular location is the cytoplasm. The catalysed reaction is Release of an N-terminal amino acid, Xaa-|-Yaa-, in which Xaa is preferably Leu, but may be other amino acids including Pro although not Arg or Lys, and Yaa may be Pro. Amino acid amides and methyl esters are also readily hydrolyzed, but rates on arylamides are exceedingly low.. The enzyme catalyses Release of an N-terminal amino acid, preferentially leucine, but not glutamic or aspartic acids.. Presumably involved in the processing and regular turnover of intracellular proteins. Catalyzes the removal of unsubstituted N-terminal amino acids from various peptides. The polypeptide is Probable cytosol aminopeptidase (Mycobacterium sp. (strain KMS)).